An 84-amino-acid chain; its full sequence is Large ribosomal subunit protein bL27 (84 aa).

Residues 1–29 (MAHKKGGGSTKNGRDSNPKYLGIKASGGS) form a disordered region.

It belongs to the bacterial ribosomal protein bL27 family.

This chain is Large ribosomal subunit protein bL27, found in Chlorobium phaeobacteroides (strain BS1).